Consider the following 115-residue polypeptide: MSLPRHTLAIQALYRRVLKLHRKLPLEIKALGDQYAKDEFRRHKKASQEQAVRFMQEWKIYADTIEQQVNSQQLNVLGKDLKDEHIESLTEEQLGQLYSLQEAALKPDSSEPRDI.

The protein belongs to the complex I LYR family. SDHAF3 subfamily. As to quaternary structure, interacts with the iron-sulfur protein subunit within the SDH catalytic dimer.

It is found in the mitochondrion matrix. In terms of biological role, plays an essential role in the assembly of succinate dehydrogenase (SDH), an enzyme complex (also referred to as respiratory complex II) that is a component of both the tricarboxylic acid (TCA) cycle and the mitochondrial electron transport chain, and which couples the oxidation of succinate to fumarate with the reduction of ubiquinone (coenzyme Q) to ubiquinol. Promotes maturation of the iron-sulfur protein subunit of the SDH catalytic dimer, protecting it from the deleterious effects of oxidants. May act together with SDHAF1. The sequence is that of Succinate dehydrogenase assembly factor 3, mitochondrial (acn9) from Nematostella vectensis (Starlet sea anemone).